The following is a 33-amino-acid chain: Protamine TP17 (33 aa).

The interval 1-33 is disordered; sequence MPRRRRSSSRPVRRRRRPRVSRRRRRRGRRRRR.

In terms of tissue distribution, testis.

Its subcellular location is the nucleus. The protein resides in the chromosome. Functionally, protamines substitute for histones in the chromatin of sperm during the haploid phase of spermatogenesis. They compact sperm DNA into a highly condensed, stable and inactive complex. The sequence is that of Protamine TP17 from Oncorhynchus mykiss (Rainbow trout).